We begin with the raw amino-acid sequence, 272 residues long: METYAVFGNPIAHSKSPFIHQQFAQQLDIVHPYGRVLAPINNFINTLDAFFAAGGKGANITVPFKEEAFARSDELTERASLAGAVNTLKRLEDGRLLGDNTDGIGLLSDLERLNFIRPGLRILLIGAGGASRGVLLPLLSLDCAVTITNRTASRAEALAKIFAHTGSVHATDMDKLDGCEFDLIINATSSGIRGEIPAIPASLIHPSLCCYDMFYQKGNTPFLSWCVQQGAKRYADGLGMLVGQAAHAVLLWHGVLPQVEPVIELLQQELLA.

Shikimate contacts are provided by residues 14 to 16 (SKS) and Thr61. The active-site Proton acceptor is the Lys65. An NADP(+)-binding site is contributed by Glu77. Shikimate contacts are provided by Asn86 and Asp102. NADP(+)-binding positions include 126-130 (GAGGA), 149-154 (NRTASR), and Met213. Tyr215 contributes to the shikimate binding site. Gly237 is a binding site for NADP(+).

The protein belongs to the shikimate dehydrogenase family. Homodimer.

The catalysed reaction is shikimate + NADP(+) = 3-dehydroshikimate + NADPH + H(+). The protein operates within metabolic intermediate biosynthesis; chorismate biosynthesis; chorismate from D-erythrose 4-phosphate and phosphoenolpyruvate: step 4/7. Involved in the biosynthesis of the chorismate, which leads to the biosynthesis of aromatic amino acids. Catalyzes the reversible NADPH linked reduction of 3-dehydroshikimate (DHSA) to yield shikimate (SA). The protein is Shikimate dehydrogenase (NADP(+)) of Salmonella enteritidis PT4 (strain P125109).